The sequence spans 331 residues: Tetraacyldisaccharide 4'-kinase (331 aa).

59–66 provides a ligand contact to ATP; sequence FVGGTGKT.

Belongs to the LpxK family.

The catalysed reaction is a lipid A disaccharide + ATP = a lipid IVA + ADP + H(+). It participates in glycolipid biosynthesis; lipid IV(A) biosynthesis; lipid IV(A) from (3R)-3-hydroxytetradecanoyl-[acyl-carrier-protein] and UDP-N-acetyl-alpha-D-glucosamine: step 6/6. Transfers the gamma-phosphate of ATP to the 4'-position of a tetraacyldisaccharide 1-phosphate intermediate (termed DS-1-P) to form tetraacyldisaccharide 1,4'-bis-phosphate (lipid IVA). The polypeptide is Tetraacyldisaccharide 4'-kinase (Alkalilimnicola ehrlichii (strain ATCC BAA-1101 / DSM 17681 / MLHE-1)).